The following is a 133-amino-acid chain: Ribosome-binding factor A (133 aa).

This sequence belongs to the RbfA family. In terms of assembly, monomer. Binds 30S ribosomal subunits, but not 50S ribosomal subunits or 70S ribosomes.

It localises to the cytoplasm. One of several proteins that assist in the late maturation steps of the functional core of the 30S ribosomal subunit. Associates with free 30S ribosomal subunits (but not with 30S subunits that are part of 70S ribosomes or polysomes). Required for efficient processing of 16S rRNA. May interact with the 5'-terminal helix region of 16S rRNA. The polypeptide is Ribosome-binding factor A (Salmonella schwarzengrund (strain CVM19633)).